Consider the following 436-residue polypeptide: UPF0229 protein Meso_0256 (436 aa).

The segment at 53–110 (PMPARGTSEPTFRPDRSSGERGYILPGNKEFAPGDRLPKPGASGGEGGTGAGRGGSDD) is disordered. Residues 94 to 106 (ASGGEGGTGAGRG) show a composition bias toward gly residues.

The protein belongs to the UPF0229 family.

This Chelativorans sp. (strain BNC1) protein is UPF0229 protein Meso_0256.